Here is a 452-residue protein sequence, read N- to C-terminus: Pup--protein ligase (452 aa).

Glu-9 contributes to the Mg(2+) binding site. Arg-53 provides a ligand contact to ATP. Residue Tyr-55 coordinates Mg(2+). The Proton acceptor role is filled by Asp-57. Glu-63 provides a ligand contact to Mg(2+). 2 residues coordinate ATP: Thr-66 and Trp-419.

It belongs to the Pup ligase/Pup deamidase family. Pup-conjugating enzyme subfamily.

It catalyses the reaction ATP + [prokaryotic ubiquitin-like protein]-L-glutamate + [protein]-L-lysine = ADP + phosphate + N(6)-([prokaryotic ubiquitin-like protein]-gamma-L-glutamyl)-[protein]-L-lysine.. It participates in protein degradation; proteasomal Pup-dependent pathway. Its pathway is protein modification; protein pupylation. Its function is as follows. Catalyzes the covalent attachment of the prokaryotic ubiquitin-like protein modifier Pup to the proteasomal substrate proteins, thereby targeting them for proteasomal degradation. This tagging system is termed pupylation. The ligation reaction involves the side-chain carboxylate of the C-terminal glutamate of Pup and the side-chain amino group of a substrate lysine. This Mycolicibacterium gilvum (strain PYR-GCK) (Mycobacterium gilvum (strain PYR-GCK)) protein is Pup--protein ligase.